The primary structure comprises 205 residues: Protein phosphatase inhibitor 2 (205 aa).

Residues 1–44 (MAASTASHRPIKGILKNKTSTTSSVVASAEQPRRTVEEELSKKS) form a disordered region. At A2 the chain carries N-acetylalanine. A required for binding PPP1CC region spans residues 12–17 (KGILKN). Over residues 19-29 (TSTTSSVVASA) the composition is skewed to low complexity. Basic and acidic residues predominate over residues 31–44 (QPRRTVEEELSKKS). Positions 43 to 55 (KSQKWDEMNILAT) are required for binding PPP1CC. S44 carries the phosphoserine; by ATM modification. T73 carries the phosphothreonine; by GSK3 modification. A phosphoserine mark is found at S87 and S89. Residues T96 and T116 each carry the phosphothreonine modification. Residues 104–142 (LAAAEGSEPKFRTREQESSGEEDNDLSPEEREKKRQFEM) form a disordered region. A compositionally biased stretch (basic and acidic residues) spans 110 to 120 (SEPKFRTREQE). Phosphoserine occurs at positions 121, 122, and 130. Positions 121–130 (SSGEEDNDLS) are enriched in acidic residues. Over residues 131–142 (PEEREKKRQFEM) the composition is skewed to basic and acidic residues. Residues 147 to 150 (HYNE) form a required for binding PPP1CC catalytic center, displacing metal ions and inhibition of PPP1CC catalytic activity region. Positions 163–205 (KDLHDDDEDEEMSETADADSMNIEESNQGSTAGDHLQHKSQSS) are disordered. Residues 167 to 179 (DDDEDEEMSETAD) are compositionally biased toward acidic residues.

The protein belongs to the protein phosphatase inhibitor 2 family. As to quaternary structure, heterodimer with PP1. Phosphorylation on Ser-44 by ATM activates PP1 by dissociating the PP1-PPP1R2 complex. Phosphorylation on Thr-73 by GSK3 activates PP1 by dissociating the PP1-PPP1R2 complex. Central nervous system.

In terms of biological role, inhibitor of protein-phosphatase 1. The protein is Protein phosphatase inhibitor 2 (Ppp1r2) of Rattus norvegicus (Rat).